The following is a 217-amino-acid chain: N-(5'-phosphoribosyl)anthranilate isomerase (217 aa).

It belongs to the TrpF family.

The enzyme catalyses N-(5-phospho-beta-D-ribosyl)anthranilate = 1-(2-carboxyphenylamino)-1-deoxy-D-ribulose 5-phosphate. The protein operates within amino-acid biosynthesis; L-tryptophan biosynthesis; L-tryptophan from chorismate: step 3/5. This Bacillus velezensis (strain DSM 23117 / BGSC 10A6 / LMG 26770 / FZB42) (Bacillus amyloliquefaciens subsp. plantarum) protein is N-(5'-phosphoribosyl)anthranilate isomerase.